We begin with the raw amino-acid sequence, 398 residues long: Serpin-Z2A (398 aa).

The tract at residues 343 to 367 (GTEAAAATIAKAVLLSASPPSDMDF) is RCL.

It belongs to the serpin family.

Its function is as follows. Inhibits chymotrypsin and cathepsin G in vitro. This Triticum aestivum (Wheat) protein is Serpin-Z2A.